Consider the following 353-residue polypeptide: Photosystem II D2 protein (353 aa).

N-acetylthreonine is present on threonine 2. A Phosphothreonine modification is found at threonine 2. Residues 41–61 (CAYFALGGWFTGTTFVTSWYT) form a helical membrane-spanning segment. Histidine 118 contributes to the chlorophyll a binding site. Residues 125 to 141 (GFMLRQFELARSVQLRP) traverse the membrane as a helical segment. Pheophytin a contacts are provided by glutamine 130 and asparagine 143. A helical membrane pass occupies residues 153–166 (VFVSVFLIYPLGQS). Histidine 198 contacts chlorophyll a. The helical transmembrane segment at 208 to 228 (AALLCAIHGATVENTLFEDGD) threads the bilayer. A plastoquinone-binding residues include histidine 215 and phenylalanine 262. Histidine 215 contacts Fe cation. Histidine 269 provides a ligand contact to Fe cation. A helical membrane pass occupies residues 279–295 (GLWMSALGVVGLALNLR).

Belongs to the reaction center PufL/M/PsbA/D family. PSII is composed of 1 copy each of membrane proteins PsbA, PsbB, PsbC, PsbD, PsbE, PsbF, PsbH, PsbI, PsbJ, PsbK, PsbL, PsbM, PsbT, PsbX, PsbY, PsbZ, Psb30/Ycf12, at least 3 peripheral proteins of the oxygen-evolving complex and a large number of cofactors. It forms dimeric complexes. The D1/D2 heterodimer binds P680, chlorophylls that are the primary electron donor of PSII, and subsequent electron acceptors. It shares a non-heme iron and each subunit binds pheophytin, quinone, additional chlorophylls, carotenoids and lipids. There is also a Cl(-1) ion associated with D1 and D2, which is required for oxygen evolution. The PSII complex binds additional chlorophylls, carotenoids and specific lipids. serves as cofactor.

It localises to the plastid. It is found in the chloroplast thylakoid membrane. The catalysed reaction is 2 a plastoquinone + 4 hnu + 2 H2O = 2 a plastoquinol + O2. Photosystem II (PSII) is a light-driven water:plastoquinone oxidoreductase that uses light energy to abstract electrons from H(2)O, generating O(2) and a proton gradient subsequently used for ATP formation. It consists of a core antenna complex that captures photons, and an electron transfer chain that converts photonic excitation into a charge separation. The D1/D2 (PsbA/PsbD) reaction center heterodimer binds P680, the primary electron donor of PSII as well as several subsequent electron acceptors. D2 is needed for assembly of a stable PSII complex. The polypeptide is Photosystem II D2 protein (Populus deltoides (Eastern poplar)).